A 223-amino-acid chain; its full sequence is Putative C-type lectin protein 51 (223 aa).

Residues Met1–Cys31 form the signal peptide. Residues Gln111 to Gly218 form the C-type lectin domain. Cys193 and Cys209 form a disulfide bridge.

The sequence is that of Putative C-type lectin protein 51 (51) from Equine herpesvirus 2 (strain 86/87) (EHV-2).